The chain runs to 90 residues: Probable Fe(2+)-trafficking protein (90 aa).

It belongs to the Fe(2+)-trafficking protein family. Monomer.

In terms of biological role, could be a mediator in iron transactions between iron acquisition and iron-requiring processes, such as synthesis and/or repair of Fe-S clusters in biosynthetic enzymes. This Hamiltonella defensa subsp. Acyrthosiphon pisum (strain 5AT) protein is Probable Fe(2+)-trafficking protein.